The following is a 732-amino-acid chain: Engulfment and cell motility protein 2 (732 aa).

Position 48 is a phosphotyrosine (tyrosine 48). Positions 323–497 (AQRDIIFELR…VVREQITRAL (175 aa)) constitute an ELMO domain. The residue at position 515 (serine 515) is a Phosphoserine. The PH domain maps to 565-686 (SSFRKIGNRR…LLGKDMSSEL (122 aa)). The SH3-binding motif lies at 712–719 (PEAPPPVP). Position 729 is a phosphotyrosine (tyrosine 729).

Interacts directly with the SH3-domain of DOCK1 via its SH3-binding site. Probably forms a heterotrimeric complex with DOCK1 and RAC1. Interacts with ARHGEF16, DOCK4 and EPHA2; mediates activation of RAC1 by EPHA2. Interacts with ADGRB3. Interacts with AUTS2; the interaction is direct.

It is found in the cytoplasm. The protein localises to the cytosol. The protein resides in the membrane. In terms of biological role, involved in cytoskeletal rearrangements required for phagocytosis of apoptotic cells and cell motility. Acts in association with DOCK1 and CRK. Was initially proposed to be required in complex with DOCK1 to activate Rac Rho small GTPases. May enhance the guanine nucleotide exchange factor (GEF) activity of DOCK1. The sequence is that of Engulfment and cell motility protein 2 (Elmo2) from Mus musculus (Mouse).